Reading from the N-terminus, the 296-residue chain is Outer surface protein B (296 aa).

A signal peptide spans 1 to 15 (MRLLIGFALALALIG). A lipid anchor (N-palmitoyl cysteine) is attached at C16. C16 carries the S-diacylglycerol cysteine lipid modification. Residues 25–51 (GSQKENDLNLEDSSKKSHQNAKQDLPA) form a disordered region. Residues 28–39 (KENDLNLEDSSK) are compositionally biased toward basic and acidic residues.

It is found in the cell outer membrane. This Borreliella burgdorferi (strain ATCC 35210 / DSM 4680 / CIP 102532 / B31) (Borrelia burgdorferi) protein is Outer surface protein B (ospB).